Reading from the N-terminus, the 273-residue chain is Putative expansin-B2 (273 aa).

A signal peptide spans 1-29 (MTILVVDRYYMLMNLLFALTCLLLNLTHC). Asparagine 36 carries an N-linked (GlcNAc...) asparagine glycan. The region spanning 65–173 (GGACGYGNAV…KKVECNYIGK (109 aa)) is the Expansin-like EG45 domain. Intrachain disulfides connect cysteine 68–cysteine 97, cysteine 100–cysteine 168, and cysteine 105–cysteine 111. The region spanning 186–269 (NSFAVLVAYV…NWQPGAIYKS (84 aa)) is the Expansin-like CBD domain.

The protein belongs to the expansin family. Expansin B subfamily.

The protein resides in the secreted. The protein localises to the cell wall. Its subcellular location is the membrane. In terms of biological role, may cause loosening and extension of plant cell walls by disrupting non-covalent bonding between cellulose microfibrils and matrix glucans. No enzymatic activity has been found. This chain is Putative expansin-B2 (EXPB2), found in Arabidopsis thaliana (Mouse-ear cress).